Reading from the N-terminus, the 146-residue chain is MTLTKGSFTYSSGEEYRGEWKEGRRHGFGQLMFADGGTYLGHFENGLFNGFGVLTFSDGSRYEGEFSQGKFNGVGVFIRYDNMTFEGEFKNGRVDGFGLLTFPDGSHGLPRNEGLFENNKLLRREKCSAVVQRAQSASKSARNLTA.

4 MORN repeats span residues 16 to 38 (YRGEWKEGRRHGFGQLMFADGGT), 39 to 61 (YLGHFENGLFNGFGVLTFSDGSR), 62 to 84 (YEGEFSQGKFNGVGVFIRYDNMT), and 85 to 107 (FEGEFKNGRVDGFGLLTFPDGSH).

In terms of assembly, interacts with MYO3A.

It localises to the cytoplasm. It is found in the cell projection. Its subcellular location is the filopodium tip. The protein resides in the stereocilium. Its function is as follows. Plays a role in promoting axonal degeneration following neuronal injury by toxic insult or trauma. The polypeptide is MORN repeat-containing protein 4 (Morn4) (Rattus norvegicus (Rat)).